The primary structure comprises 440 residues: Gamma-aminobutyric acid receptor subunit pi (440 aa).

Residues 1–23 (MSYSLYLAFLCLSLLTQRTCIQG) form the signal peptide. The Extracellular portion of the chain corresponds to 24 to 241 (NQVNVEVSRS…LVLQFELRRN (218 aa)). Residues asparagine 43, asparagine 102, and asparagine 145 are each glycosylated (N-linked (GlcNAc...) asparagine). Residues cysteine 160 and cysteine 174 are joined by a disulfide bond. 2 N-linked (GlcNAc...) asparagine glycosylation sites follow: asparagine 196 and asparagine 228. A helical membrane pass occupies residues 242–262 (VLYFILETYVPSTFLVVLSWV). The Cytoplasmic portion of the chain corresponds to 263–270 (SFWISLDS). The chain crosses the membrane as a helical span at residues 271–290 (VPARTCIGVTTVLSMTTLMI). At 291–301 (GSRTSLPNTNC) the chain is on the extracellular side. The chain crosses the membrane as a helical span at residues 302–322 (FIKAIDVYLGICFSFVFGALL). The Cytoplasmic portion of the chain corresponds to 323 to 419 (EYAVAHYSSL…NPSNVDRYSK (97 aa)). A helical transmembrane segment spans residues 420-440 (LLFPLIFMLANVFYWAYYMYF).

Belongs to the ligand-gated ion channel (TC 1.A.9) family. Gamma-aminobutyric acid receptor (TC 1.A.9.5) subfamily. GABRP sub-subfamily. Heteropentamer, formed by a combination of alpha (GABRA1-6), beta (GABRB1-3), gamma (GABRG1-3), delta (GABRD), epsilon (GABRE), rho (GABRR1-3), pi (GABRP) and theta (GABRQ) chains, each subunit exhibiting distinct physiological and pharmacological properties.

It localises to the cell membrane. It is found in the apical cell membrane. The catalysed reaction is chloride(in) = chloride(out). Pi subunit of the heteropentameric ligand-gated chloride channel gated by gamma-aminobutyric acid (GABA). GABA-gated chloride channels, also named GABA(A) receptors (GABAAR), consist of five subunits arranged around a central pore and contain GABA active binding site(s) located at the alpha and beta subunit interfaces. When activated by GABA, GABAARs selectively allow the flow of chloride anions across the cell membrane down their electrochemical gradient. Pi-containing GABAARs are mostly located in peripheral tissues. In the uterus, pi subunits modulate uterus contraction by altering the sensitivity of GABAARs to pregnanolone. In the lungs, pi-containing GABAARs contribute to pulmonary fluid transport via luminal secretion of chloride. In Mus musculus (Mouse), this protein is Gamma-aminobutyric acid receptor subunit pi.